Consider the following 562-residue polypeptide: Dihydroxy-acid dehydratase (562 aa).

D80 lines the Mg(2+) pocket. C121 contacts [2Fe-2S] cluster. Mg(2+)-binding residues include D122 and K123. K123 bears the N6-carboxylysine mark. C194 contributes to the [2Fe-2S] cluster binding site. A Mg(2+)-binding site is contributed by E446. S472 acts as the Proton acceptor in catalysis.

The protein belongs to the IlvD/Edd family. In terms of assembly, homodimer. Requires [2Fe-2S] cluster as cofactor. Mg(2+) serves as cofactor.

The enzyme catalyses (2R)-2,3-dihydroxy-3-methylbutanoate = 3-methyl-2-oxobutanoate + H2O. It catalyses the reaction (2R,3R)-2,3-dihydroxy-3-methylpentanoate = (S)-3-methyl-2-oxopentanoate + H2O. It participates in amino-acid biosynthesis; L-isoleucine biosynthesis; L-isoleucine from 2-oxobutanoate: step 3/4. Its pathway is amino-acid biosynthesis; L-valine biosynthesis; L-valine from pyruvate: step 3/4. In terms of biological role, functions in the biosynthesis of branched-chain amino acids. Catalyzes the dehydration of (2R,3R)-2,3-dihydroxy-3-methylpentanoate (2,3-dihydroxy-3-methylvalerate) into 2-oxo-3-methylpentanoate (2-oxo-3-methylvalerate) and of (2R)-2,3-dihydroxy-3-methylbutanoate (2,3-dihydroxyisovalerate) into 2-oxo-3-methylbutanoate (2-oxoisovalerate), the penultimate precursor to L-isoleucine and L-valine, respectively. The sequence is that of Dihydroxy-acid dehydratase from Staphylococcus aureus (strain USA300 / TCH1516).